A 234-amino-acid chain; its full sequence is uncharacterized protein (234 aa).

Residues 62-99 form a disordered region; it reads NEESISDLNSDNPGNSEPSDVESFVLSDEDENSEKDFS. The segment covering 67–79 has biased composition (polar residues); that stretch reads SDLNSDNPGNSEP.

This is an uncharacterized protein from Acanthamoeba polyphaga (Amoeba).